A 123-amino-acid polypeptide reads, in one-letter code: Histone H2B.3 (123 aa).

The tract at residues 1–30 is disordered; that stretch reads MPPKVSGKAAKKAGKAQKNISKGDKKKNRK. O-linked (GlcNAc) serine glycosylation occurs at S110. K118 is covalently cross-linked (Glycyl lysine isopeptide (Lys-Gly) (interchain with G-Cter in ubiquitin)).

This sequence belongs to the histone H2B family. The nucleosome is a histone octamer containing two molecules each of H2A, H2B, H3 and H4 assembled in one H3-H4 heterotetramer and two H2A-H2B heterodimers. The octamer wraps approximately 147 bp of DNA. Monoubiquitination of Lys-118 gives a specific tag for epigenetic transcriptional activation and is also prerequisite for histone H3 'Lys-4' and 'Lys-79' methylation. Post-translationally, glcNAcylation at Ser-110 promotes monoubiquitination of Lys-118. It fluctuates in response to extracellular glucose, and associates with transcribed genes.

It localises to the nucleus. Its subcellular location is the chromosome. Core component of nucleosome. Nucleosomes wrap and compact DNA into chromatin, limiting DNA accessibility to the cellular machineries which require DNA as a template. Histones thereby play a central role in transcription regulation, DNA repair, DNA replication and chromosomal stability. DNA accessibility is regulated via a complex set of post-translational modifications of histones, also called histone code, and nucleosome remodeling. This is Histone H2B.3 from Tigriopus californicus (Marine copepod).